The primary structure comprises 242 residues: Carboxy-S-adenosyl-L-methionine synthase (242 aa).

S-adenosyl-L-methionine-binding positions include tyrosine 39, 64–66 (GCS), 89–90 (DN), 117–118 (DI), asparagine 132, and arginine 199.

It belongs to the class I-like SAM-binding methyltransferase superfamily. Cx-SAM synthase family. As to quaternary structure, homodimer.

The enzyme catalyses prephenate + S-adenosyl-L-methionine = carboxy-S-adenosyl-L-methionine + 3-phenylpyruvate + H2O. Functionally, catalyzes the conversion of S-adenosyl-L-methionine (SAM) to carboxy-S-adenosyl-L-methionine (Cx-SAM). The protein is Carboxy-S-adenosyl-L-methionine synthase of Psychromonas ingrahamii (strain DSM 17664 / CCUG 51855 / 37).